A 249-amino-acid polypeptide reads, in one-letter code: Phosphoribosylaminoimidazole-succinocarboxamide synthase (249 aa).

Belongs to the SAICAR synthetase family.

The enzyme catalyses 5-amino-1-(5-phospho-D-ribosyl)imidazole-4-carboxylate + L-aspartate + ATP = (2S)-2-[5-amino-1-(5-phospho-beta-D-ribosyl)imidazole-4-carboxamido]succinate + ADP + phosphate + 2 H(+). It participates in purine metabolism; IMP biosynthesis via de novo pathway; 5-amino-1-(5-phospho-D-ribosyl)imidazole-4-carboxamide from 5-amino-1-(5-phospho-D-ribosyl)imidazole-4-carboxylate: step 1/2. In Roseiflexus sp. (strain RS-1), this protein is Phosphoribosylaminoimidazole-succinocarboxamide synthase.